Here is an 858-residue protein sequence, read N- to C-terminus: Transcription factor pytR (858 aa).

Residues methionine 1–leucine 35 are disordered. The segment at residues cysteine 39–cysteine 65 is a DNA-binding region (zn(2)-C6 fungal-type). Residues arginine 72 to glycine 99 are disordered.

It is found in the nucleus. In terms of biological role, transcription factor that regulates the expression of the gene cluster that mediates the biosynthesis of Pyranterreones, a family of antioxidative compounds. The polypeptide is Transcription factor pytR (Aspergillus terreus (strain NIH 2624 / FGSC A1156)).